A 294-amino-acid chain; its full sequence is BOI-related E3 ubiquitin-protein ligase 1 (294 aa).

The tract at residues 168-204 (LQERVKNLYVENQIWRDLAQTNEATANNLRSNLEQVL) is WRD domain. Positions 183-212 (RDLAQTNEATANNLRSNLEQVLAQVDDLDA) form a coiled coil. The RING-type zinc-finger motif lies at 244–281 (CKRCGELTASVLVLPCRHLCLCTVCGSSALLRTCPVCD).

In terms of assembly, interacts with the DELLA proteins GAI, RGA, RGL1, RGL2 and RGL3.

The catalysed reaction is S-ubiquitinyl-[E2 ubiquitin-conjugating enzyme]-L-cysteine + [acceptor protein]-L-lysine = [E2 ubiquitin-conjugating enzyme]-L-cysteine + N(6)-ubiquitinyl-[acceptor protein]-L-lysine.. It participates in protein degradation; proteasomal ubiquitin-dependent pathway. Its function is as follows. E3 ubiquitin-protein ligase involved in regulation of abiotic stress responses. Not involved in ubiquitination of MYB108/BOS1. Has no effect on the stability of the DELLA proteins. In Arabidopsis thaliana (Mouse-ear cress), this protein is BOI-related E3 ubiquitin-protein ligase 1 (BRG1).